The chain runs to 295 residues: Bifunctional protein FolD (295 aa).

Residues 165–167 (GRS), Ser190, and Ile231 each bind NADP(+).

Belongs to the tetrahydrofolate dehydrogenase/cyclohydrolase family. In terms of assembly, homodimer.

It catalyses the reaction (6R)-5,10-methylene-5,6,7,8-tetrahydrofolate + NADP(+) = (6R)-5,10-methenyltetrahydrofolate + NADPH. It carries out the reaction (6R)-5,10-methenyltetrahydrofolate + H2O = (6R)-10-formyltetrahydrofolate + H(+). Its pathway is one-carbon metabolism; tetrahydrofolate interconversion. In terms of biological role, catalyzes the oxidation of 5,10-methylenetetrahydrofolate to 5,10-methenyltetrahydrofolate and then the hydrolysis of 5,10-methenyltetrahydrofolate to 10-formyltetrahydrofolate. In Nitrosomonas eutropha (strain DSM 101675 / C91 / Nm57), this protein is Bifunctional protein FolD.